A 477-amino-acid chain; its full sequence is Protoporphyrinogen oxidase (477 aa).

FAD contacts are provided by residues 9-14 (GGGISG), tryptophan 42, 57-60 (GPRG), valine 257, alanine 449, and 454-456 (VAV).

Belongs to the protoporphyrinogen/coproporphyrinogen oxidase family. Protoporphyrinogen oxidase subfamily. Monomer. Homodimer. FAD is required as a cofactor.

It localises to the mitochondrion inner membrane. It carries out the reaction protoporphyrinogen IX + 3 O2 = protoporphyrin IX + 3 H2O2. It functions in the pathway porphyrin-containing compound metabolism; protoporphyrin-IX biosynthesis; protoporphyrin-IX from protoporphyrinogen-IX: step 1/1. Its activity is regulated as follows. Inhibited by acifluorfen. Catalyzes the 6-electron oxidation of protoporphyrinogen-IX to form protoporphyrin-IX. The sequence is that of Protoporphyrinogen oxidase (Ppox) from Mus musculus (Mouse).